A 556-amino-acid chain; its full sequence is Formate--tetrahydrofolate ligase (556 aa).

65–72 contacts ATP; the sequence is TSAGEGKT.

Belongs to the formate--tetrahydrofolate ligase family.

It carries out the reaction (6S)-5,6,7,8-tetrahydrofolate + formate + ATP = (6R)-10-formyltetrahydrofolate + ADP + phosphate. It participates in one-carbon metabolism; tetrahydrofolate interconversion. The chain is Formate--tetrahydrofolate ligase from Kosmotoga olearia (strain ATCC BAA-1733 / DSM 21960 / TBF 19.5.1).